The following is a 94-amino-acid chain: Integration host factor subunit beta (94 aa).

This sequence belongs to the bacterial histone-like protein family. As to quaternary structure, heterodimer of an alpha and a beta chain.

Functionally, this protein is one of the two subunits of integration host factor, a specific DNA-binding protein that functions in genetic recombination as well as in transcriptional and translational control. This is Integration host factor subunit beta (ihfB) from Dickeya dadantii (strain 3937) (Erwinia chrysanthemi (strain 3937)).